The primary structure comprises 1488 residues: Chromosome partition protein MukB (1488 aa).

34–41 is an ATP binding site; sequence GGNGAGKS. Coiled-coil stretches lie at residues 326–418, 444–472, and 509–602; these read LEAD…QYNQ, LDTFQAKEQEATEKLLSLEQKMSVAQTAH, and RHLA…QRAP. A flexible hinge region spans residues 666-783; the sequence is PGGAEDQRLN…SLPIFGRAAR (118 aa). Coiled coils occupy residues 835–923, 977–1116, and 1209–1265; these read EAEI…AKLE, EMLS…AKAG, and VEAI…LQSV. Residues 1049-1074 are disordered; that stretch reads ADSGAEERARQRRDELHAQLSNNRSR. Over residues 1051 to 1065 the composition is skewed to basic and acidic residues; it reads SGAEERARQRRDELH.

The protein belongs to the SMC family. MukB subfamily. As to quaternary structure, homodimerization via its hinge domain. Binds to DNA via its C-terminal region. Interacts, and probably forms a ternary complex, with MukE and MukF via its C-terminal region. The complex formation is stimulated by calcium or magnesium. Interacts with tubulin-related protein FtsZ.

Its subcellular location is the cytoplasm. The protein localises to the nucleoid. Functionally, plays a central role in chromosome condensation, segregation and cell cycle progression. Functions as a homodimer, which is essential for chromosome partition. Involved in negative DNA supercoiling in vivo, and by this means organize and compact chromosomes. May achieve or facilitate chromosome segregation by condensation DNA from both sides of a centrally located replisome during cell division. This Salmonella gallinarum (strain 287/91 / NCTC 13346) protein is Chromosome partition protein MukB.